Here is a 324-residue protein sequence, read N- to C-terminus: Phospho-N-acetylmuramoyl-pentapeptide-transferase (324 aa).

Transmembrane regions (helical) follow at residues 9-29, 54-74, 77-97, 117-137, 147-167, 176-196, 201-221, 227-247, 253-273, and 304-324; these read TFAV…PFLV, MGAV…SFIG, VSAA…LGFL, FLGQ…SDFA, IEVD…VGFS, LDGL…VIAF, MDVA…LLFN, IFMG…VSIL, LLLL…LQVF, and VLTF…VVIF.

The protein belongs to the glycosyltransferase 4 family. MraY subfamily. Requires Mg(2+) as cofactor.

The protein localises to the cell membrane. It catalyses the reaction UDP-N-acetyl-alpha-D-muramoyl-L-alanyl-gamma-D-glutamyl-meso-2,6-diaminopimeloyl-D-alanyl-D-alanine + di-trans,octa-cis-undecaprenyl phosphate = di-trans,octa-cis-undecaprenyl diphospho-N-acetyl-alpha-D-muramoyl-L-alanyl-D-glutamyl-meso-2,6-diaminopimeloyl-D-alanyl-D-alanine + UMP. It functions in the pathway cell wall biogenesis; peptidoglycan biosynthesis. Catalyzes the initial step of the lipid cycle reactions in the biosynthesis of the cell wall peptidoglycan: transfers peptidoglycan precursor phospho-MurNAc-pentapeptide from UDP-MurNAc-pentapeptide onto the lipid carrier undecaprenyl phosphate, yielding undecaprenyl-pyrophosphoryl-MurNAc-pentapeptide, known as lipid I. This Listeria welshimeri serovar 6b (strain ATCC 35897 / DSM 20650 / CCUG 15529 / CIP 8149 / NCTC 11857 / SLCC 5334 / V8) protein is Phospho-N-acetylmuramoyl-pentapeptide-transferase.